The sequence spans 242 residues: 3-deoxy-manno-octulosonate cytidylyltransferase (242 aa).

It belongs to the KdsB family.

The protein resides in the cytoplasm. The enzyme catalyses 3-deoxy-alpha-D-manno-oct-2-ulosonate + CTP = CMP-3-deoxy-beta-D-manno-octulosonate + diphosphate. It participates in nucleotide-sugar biosynthesis; CMP-3-deoxy-D-manno-octulosonate biosynthesis; CMP-3-deoxy-D-manno-octulosonate from 3-deoxy-D-manno-octulosonate and CTP: step 1/1. It functions in the pathway bacterial outer membrane biogenesis; lipopolysaccharide biosynthesis. Its function is as follows. Activates KDO (a required 8-carbon sugar) for incorporation into bacterial lipopolysaccharide in Gram-negative bacteria. In Anaeromyxobacter dehalogenans (strain 2CP-C), this protein is 3-deoxy-manno-octulosonate cytidylyltransferase.